The chain runs to 361 residues: MTVTALGLPTVARSTGDGSAGASPAPADGPLVDTYGRAATDLRVSLTDRCNLRCTYCMPAEGLNWLPGDALLSPTELARLLRIAVARLGITSVRFTGGEPLVVRHLEEVVAAAAALEPRPEITLTTNGLGLARRAEGLKKAGLNRINVSLDSVDAAHFARITRRDRLPDVLAGLAAAKAAGLEPVKVNAVLDPVSGLDDAVELLRYCLQHGYQLRIIEQMPLDASHSWQRDNVIDADRILQTLQQHFELTPDSRPRGSAPAELWQVAEGPTHAAGTVGVIASVSHAFCSACDRTRLTADGQIRSCLFSREETDLRHLLRGGADDAEIEAAWRAAMWSKPAGHGINDPDFVQPVRPMSAIGG.

The interval 1-30 (MTVTALGLPTVARSTGDGSAGASPAPADGP) is disordered. Low complexity predominate over residues 16–30 (GDGSAGASPAPADGP). Residues 34–252 (TYGRAATDLR…LQQHFELTPD (219 aa)) form the Radical SAM core domain. A GTP-binding site is contributed by Arg43. 2 residues coordinate [4Fe-4S] cluster: Cys50 and Cys54. Tyr56 provides a ligand contact to S-adenosyl-L-methionine. Residue Cys57 coordinates [4Fe-4S] cluster. Position 94 (Arg94) interacts with GTP. Gly98 is an S-adenosyl-L-methionine binding site. Thr125 is a binding site for GTP. Ser149 contacts S-adenosyl-L-methionine. Lys186 provides a ligand contact to GTP. Met220 contacts S-adenosyl-L-methionine. [4Fe-4S] cluster is bound by residues Cys288 and Cys291. 293–295 (RTR) is a binding site for GTP. Cys305 is a [4Fe-4S] cluster binding site.

Belongs to the radical SAM superfamily. MoaA family. In terms of assembly, monomer and homodimer. It depends on [4Fe-4S] cluster as a cofactor.

The enzyme catalyses GTP + AH2 + S-adenosyl-L-methionine = (8S)-3',8-cyclo-7,8-dihydroguanosine 5'-triphosphate + 5'-deoxyadenosine + L-methionine + A + H(+). It functions in the pathway cofactor biosynthesis; molybdopterin biosynthesis. Catalyzes the cyclization of GTP to (8S)-3',8-cyclo-7,8-dihydroguanosine 5'-triphosphate. In Mycolicibacterium smegmatis (strain ATCC 700084 / mc(2)155) (Mycobacterium smegmatis), this protein is GTP 3',8-cyclase.